Reading from the N-terminus, the 288-residue chain is Transmembrane and coiled-coil domain-containing protein 5A (288 aa).

A coiled-coil region spans residues 10–192 (KRNIISLNMD…ALFLEREVSK (183 aa)). Residues 224 to 244 (IFCCLFFITLFFIRLLSYMFF) form a helical membrane-spanning segment.

The protein belongs to the TMCO5 family.

The protein resides in the endoplasmic reticulum membrane. The protein localises to the nucleus membrane. This is Transmembrane and coiled-coil domain-containing protein 5A (TMCO5A) from Homo sapiens (Human).